The sequence spans 908 residues: 26S proteasome non-ATPase regulatory subunit 2 (908 aa).

N-acetylmethionine is present on methionine 1. The segment at 1–51 (MEEGGRDKTPVQSQQPSATAPSGADEKSSGKERRDAGEKDKEQELSEEDKQ) is disordered. Threonine 9 carries the phosphothreonine modification. The span at 10-20 (PVQSQQPSATA) shows a compositional bias: polar residues. The span at 24–51 (ADEKSSGKERRDAGEKDKEQELSEEDKQ) shows a compositional bias: basic and acidic residues. Phosphoserine occurs at positions 29 and 147. Position 194 is a phosphotyrosine (tyrosine 194). A phosphoserine mark is found at serine 361 and serine 363. PC repeat units follow at residues 409–442 (SAAA…YIKS), 443–479 (GALL…TMRL), 480–514 (GSIF…SMEV), 517–551 (VTAL…TELK), and 560–589 (LGLG…PFRS). The residue at position 551 (lysine 551) is an N6-acetyllysine. Over residues 623 to 643 (KEKEEDKDKKEKKDKDKKEAP) the composition is skewed to basic and acidic residues. Positions 623 to 645 (KEKEEDKDKKEKKDKDKKEAPAD) are disordered. PC repeat units follow at residues 692-723 (LALA…EVSY) and 742-757 (AAML…KDPN). The required for interaction with UBLCP1 stretch occupies residues 708-903 (DTLSKFSHDA…LEGFVILRKN (196 aa)).

Belongs to the proteasome subunit S2 family. In terms of assembly, component of the 19S proteasome regulatory particle complex. The 26S proteasome consists of a 20S core particle (CP) and two 19S regulatory subunits (RP). The regulatory particle is made of a lid composed of 9 subunits, a base containing 6 ATPases and few additional components including PSMD2. Interacts with RPGRIP1L. Interacts with CRY1 in a KDM8-dependent manner. Interacts (via C-terminus) with phosphatase UBLCP1 (via ubiquitin-like domain); the interaction recruits UBLCP1 to the 19S regulatory particle where it dephosphorylates 19S subunit PSMC2/RPT1 which impairs PSMC2 ATPase activity and disrupts 26S proteasome assembly.

In terms of biological role, component of the 26S proteasome, a multiprotein complex involved in the ATP-dependent degradation of ubiquitinated proteins. This complex plays a key role in the maintenance of protein homeostasis by removing misfolded or damaged proteins, which could impair cellular functions, and by removing proteins whose functions are no longer required. Therefore, the proteasome participates in numerous cellular processes, including cell cycle progression, apoptosis, or DNA damage repair. Functionally, binds to the intracellular domain of tumor necrosis factor type 1 receptor. The binding domain of TRAP1 and TRAP2 resides outside the death domain of TNFR1. This is 26S proteasome non-ATPase regulatory subunit 2 (Psmd2) from Rattus norvegicus (Rat).